A 251-amino-acid polypeptide reads, in one-letter code: Triosephosphate isomerase (251 aa).

A substrate-binding site is contributed by 9–11; sequence NWK. The active-site Electrophile is the His-96. Glu-167 functions as the Proton acceptor in the catalytic mechanism. Residues Gly-173, Ser-213, and 234–235 each bind substrate; that span reads GG.

This sequence belongs to the triosephosphate isomerase family. In terms of assembly, homodimer.

The protein resides in the cytoplasm. The enzyme catalyses D-glyceraldehyde 3-phosphate = dihydroxyacetone phosphate. The protein operates within carbohydrate biosynthesis; gluconeogenesis. It functions in the pathway carbohydrate degradation; glycolysis; D-glyceraldehyde 3-phosphate from glycerone phosphate: step 1/1. Involved in the gluconeogenesis. Catalyzes stereospecifically the conversion of dihydroxyacetone phosphate (DHAP) to D-glyceraldehyde-3-phosphate (G3P). The chain is Triosephosphate isomerase from Phocaeicola vulgatus (strain ATCC 8482 / DSM 1447 / JCM 5826 / CCUG 4940 / NBRC 14291 / NCTC 11154) (Bacteroides vulgatus).